The sequence spans 56 residues: Ovomucoid (56 aa).

The Kazal-like domain occupies 6 to 56; sequence VDCSEYPKPACMSEYRPLCGSDNKTYVNKCNFCNAVVESNGTLTLSHFGKC. Intrachain disulfides connect C8/C38, C16/C35, and C24/C56. Residue N45 is glycosylated (N-linked (GlcNAc...) asparagine).

The protein localises to the secreted. The protein is Ovomucoid of Colinus virginianus (Northern bobwhite).